Reading from the N-terminus, the 213-residue chain is NADH dehydrogenase [ubiquinone] iron-sulfur protein 7, mitochondrial (213 aa).

The transit peptide at 1–38 directs the protein to the mitochondrion; the sequence is MAALSAPGLCGFRILGLRSSVGTAVQARGVHQSVATDG. The tract at residues 32-53 is disordered; that stretch reads QSVATDGPSSTQPALPKARAVA. Positions 33–44 are enriched in polar residues; that stretch reads SVATDGPSSTQP. Positions 88 and 89 each coordinate [4Fe-4S] cluster. At R111 the chain carries Hydroxyarginine. Residues C153 and C183 each contribute to the [4Fe-4S] cluster site.

The protein belongs to the complex I 20 kDa subunit family. As to quaternary structure, core subunit of respiratory chain NADH dehydrogenase (Complex I) which is composed of 45 different subunits. This is a component of the iron-sulfur (IP) fragment of the enzyme. Requires [4Fe-4S] cluster as cofactor. In terms of processing, hydroxylated ar Arg-111 by NDUFAF5 early in the pathway of assembly of complex I, before the formation of the juncture between peripheral and membrane arms.

It is found in the mitochondrion inner membrane. It carries out the reaction a ubiquinone + NADH + 5 H(+)(in) = a ubiquinol + NAD(+) + 4 H(+)(out). In terms of biological role, core subunit of the mitochondrial membrane respiratory chain NADH dehydrogenase (Complex I) which catalyzes electron transfer from NADH through the respiratory chain, using ubiquinone as an electron acceptor. Essential for the catalytic activity of complex I. The polypeptide is NADH dehydrogenase [ubiquinone] iron-sulfur protein 7, mitochondrial (NDUFS7) (Gorilla gorilla gorilla (Western lowland gorilla)).